The sequence spans 234 residues: Purine nucleoside phosphorylase DeoD-type (234 aa).

Residue histidine 4 participates in a purine D-ribonucleoside binding. Residues glycine 20, arginine 24, arginine 43, and 87 to 90 (RIGS) each bind phosphate. A purine D-ribonucleoside contacts are provided by residues 179-181 (DME) and 203-204 (SD). Aspartate 204 (proton donor) is an active-site residue.

Belongs to the PNP/UDP phosphorylase family. Homohexamer; trimer of homodimers.

The enzyme catalyses a purine D-ribonucleoside + phosphate = a purine nucleobase + alpha-D-ribose 1-phosphate. It carries out the reaction a purine 2'-deoxy-D-ribonucleoside + phosphate = a purine nucleobase + 2-deoxy-alpha-D-ribose 1-phosphate. Functionally, catalyzes the reversible phosphorolytic breakdown of the N-glycosidic bond in the beta-(deoxy)ribonucleoside molecules, with the formation of the corresponding free purine bases and pentose-1-phosphate. In Shewanella oneidensis (strain ATCC 700550 / JCM 31522 / CIP 106686 / LMG 19005 / NCIMB 14063 / MR-1), this protein is Purine nucleoside phosphorylase DeoD-type.